A 78-amino-acid polypeptide reads, in one-letter code: Large ribosomal subunit protein bL28 (78 aa).

The segment at 1-25 (MSRVCQVTGKRPAVGNNRSHAKNAT) is disordered.

Belongs to the bacterial ribosomal protein bL28 family.

This chain is Large ribosomal subunit protein bL28, found in Aliivibrio salmonicida (strain LFI1238) (Vibrio salmonicida (strain LFI1238)).